The primary structure comprises 262 residues: NAD-dependent glucose-6-phosphate dehydrogenase (262 aa).

NAD(+)-binding residues include N90, S115, Y152, and K156. Y152 acts as the Proton acceptor in catalysis.

Belongs to the NAD(P)-dependent epimerase/dehydratase family. Homodimer.

It catalyses the reaction D-glucose 6-phosphate + NAD(+) = 6-phospho-D-glucono-1,5-lactone + NADH + H(+). It participates in carbohydrate degradation; pentose phosphate pathway. In terms of biological role, catalyzes the NAD-dependent oxidation of glucose 6-phosphate to 6-phosphogluconolactone. This chain is NAD-dependent glucose-6-phosphate dehydrogenase, found in Haloferax volcanii (strain ATCC 29605 / DSM 3757 / JCM 8879 / NBRC 14742 / NCIMB 2012 / VKM B-1768 / DS2) (Halobacterium volcanii).